Consider the following 321-residue polypeptide: Transmembrane protein 255A (321 aa).

A run of 4 helical transmembrane segments spans residues 29-49 (VFVT…GMAA), 56-76 (VTVG…LGII), 88-108 (LVAS…CAIV), and 200-220 (TILN…LGGF). Positions 279-297 (STPSGLSDDPNGQASSFMW) are enriched in polar residues. Positions 279 to 300 (STPSGLSDDPNGQASSFMWPSN) are disordered.

The protein belongs to the TMEM255 family.

The protein localises to the membrane. In Xenopus laevis (African clawed frog), this protein is Transmembrane protein 255A (tmem255a).